Here is a 379-residue protein sequence, read N- to C-terminus: 23S rRNA (uracil(747)-C(5))-methyltransferase RlmC (379 aa).

Residues cysteine 3, cysteine 11, cysteine 14, and cysteine 86 each contribute to the [4Fe-4S] cluster site. Residues glutamine 211, phenylalanine 240, glutamate 262, and asparagine 310 each contribute to the S-adenosyl-L-methionine site. Catalysis depends on cysteine 337, which acts as the Nucleophile.

Belongs to the class I-like SAM-binding methyltransferase superfamily. RNA M5U methyltransferase family. RlmC subfamily.

The catalysed reaction is uridine(747) in 23S rRNA + S-adenosyl-L-methionine = 5-methyluridine(747) in 23S rRNA + S-adenosyl-L-homocysteine + H(+). Functionally, catalyzes the formation of 5-methyl-uridine at position 747 (m5U747) in 23S rRNA. The sequence is that of 23S rRNA (uracil(747)-C(5))-methyltransferase RlmC from Halothiobacillus neapolitanus (strain ATCC 23641 / c2) (Thiobacillus neapolitanus).